Here is a 284-residue protein sequence, read N- to C-terminus: Pseudopaline exporter CntI (284 aa).

The next 10 membrane-spanning stretches (helical) occupy residues 2–22, 34–54, 74–94, 96–116, 122–142, 147–167, 179–199, 209–229, 236–256, and 259–279; these read VLDL…TFSV, LPAA…IYLL, GVMG…IPLA, ASIL…LFLG, AVYW…KPFS, SVYA…SVAI, IVFY…WSDF, GLLL…TRAF, IVAV…WLFW, and VPDA…IALS. 2 EamA domains span residues 8–138 and 151–279; these read SGVL…LMIV and VVGL…IALS.

It belongs to the EamA transporter family.

It is found in the cell inner membrane. In terms of biological role, transports the metallophore pseudopaline, which is involved in the acquisition of nickel and zinc, and thus enables bacterial growth inside the host, where metal access is limited. Is probably involved in the export of pseudopaline. The polypeptide is Pseudopaline exporter CntI (Pseudomonas aeruginosa (strain UCBPP-PA14)).